The following is a 257-amino-acid chain: Diphthine synthase (257 aa).

S-adenosyl-L-methionine is bound by residues leucine 9, aspartate 83, methionine 86, 111–112 (SI), and isoleucine 163.

This sequence belongs to the diphthine synthase family. Homodimer.

It carries out the reaction 2-[(3S)-amino-3-carboxypropyl]-L-histidyl-[translation elongation factor 2] + 3 S-adenosyl-L-methionine = diphthine-[translation elongation factor 2] + 3 S-adenosyl-L-homocysteine + 3 H(+). It functions in the pathway protein modification; peptidyl-diphthamide biosynthesis. Functionally, S-adenosyl-L-methionine-dependent methyltransferase that catalyzes the trimethylation of the amino group of the modified target histidine residue in translation elongation factor 2 (EF-2), to form an intermediate called diphthine. The three successive methylation reactions represent the second step of diphthamide biosynthesis. The polypeptide is Diphthine synthase (Thermoplasma acidophilum (strain ATCC 25905 / DSM 1728 / JCM 9062 / NBRC 15155 / AMRC-C165)).